Reading from the N-terminus, the 638-residue chain is ABC transporter G family member 12 (638 aa).

The tract at residues 42–61 is disordered; sequence KQEKAKKKNDTESSTGDMNT. The ABC transporter domain occupies 58–301; that stretch reads DMNTGVSTTI…SLGYPCPNNT (244 aa). 91 to 98 is an ATP binding site; the sequence is GPSGSGKS. One can recognise an ABC transmembrane type-2 domain in the interval 374 to 633; sequence GNFVARVGTA…WTSYLALHFL (260 aa). A run of 7 helical transmembrane segments spans residues 376–396, 410–430, 459–479, 484–504, 516–536, 544–564, and 612–632; these read FVAR…CFAG, TIFF…SLFL, TLIV…FAHL, GHFF…DFMI, MTFA…GFYV, SFGW…LVVN, and FGVV…ALHF.

It belongs to the ABC transporter superfamily. ABCG family. Eye pigment precursor importer (TC 3.A.1.204) subfamily.

It is found in the membrane. The protein is ABC transporter G family member 12 (abcG12) of Dictyostelium discoideum (Social amoeba).